We begin with the raw amino-acid sequence, 72 residues long: Rubredoxin (72 aa).

The Rubredoxin-like domain maps to 19–72 (DAVLECKICWQRYDPAEGDPVWQIPPGTPFAALPAHWRCPRCDGDREQFMVVDG). Positions 24, 27, 57, and 60 each coordinate Fe cation.

The protein belongs to the rubredoxin family. It depends on Fe(3+) as a cofactor.

Functionally, rubredoxin is a small nonheme, iron protein lacking acid-labile sulfide. Its single Fe, chelated to 4 Cys, functions as an electron acceptor and may also stabilize the conformation of the molecule. Could be involved in hydrogenase-linked redox processes. The sequence is that of Rubredoxin (hoxR) from Azotobacter vinelandii.